We begin with the raw amino-acid sequence, 342 residues long: Probable dual-specificity RNA methyltransferase RlmN (342 aa).

Catalysis depends on E91, which acts as the Proton acceptor. Residues 97–327 (YKHGNSICVS…TTIRREMGAD (231 aa)) form the Radical SAM core domain. Residues C104 and C332 are joined by a disulfide bond. [4Fe-4S] cluster contacts are provided by C111, C115, and C118. S-adenosyl-L-methionine contacts are provided by residues 158–159 (GE), S190, 213–215 (SLH), and N289. Catalysis depends on C332, which acts as the S-methylcysteine intermediate.

It belongs to the radical SAM superfamily. RlmN family. [4Fe-4S] cluster serves as cofactor.

The protein localises to the cytoplasm. It catalyses the reaction adenosine(2503) in 23S rRNA + 2 reduced [2Fe-2S]-[ferredoxin] + 2 S-adenosyl-L-methionine = 2-methyladenosine(2503) in 23S rRNA + 5'-deoxyadenosine + L-methionine + 2 oxidized [2Fe-2S]-[ferredoxin] + S-adenosyl-L-homocysteine. The enzyme catalyses adenosine(37) in tRNA + 2 reduced [2Fe-2S]-[ferredoxin] + 2 S-adenosyl-L-methionine = 2-methyladenosine(37) in tRNA + 5'-deoxyadenosine + L-methionine + 2 oxidized [2Fe-2S]-[ferredoxin] + S-adenosyl-L-homocysteine. Specifically methylates position 2 of adenine 2503 in 23S rRNA and position 2 of adenine 37 in tRNAs. This is Probable dual-specificity RNA methyltransferase RlmN from Clostridium botulinum (strain ATCC 19397 / Type A).